A 344-amino-acid chain; its full sequence is Heat-inducible transcription repressor HrcA (344 aa).

It belongs to the HrcA family.

Its function is as follows. Negative regulator of class I heat shock genes (grpE-dnaK-dnaJ and groELS operons). Prevents heat-shock induction of these operons. In Streptococcus sanguinis (strain SK36), this protein is Heat-inducible transcription repressor HrcA.